We begin with the raw amino-acid sequence, 75 residues long: Exodeoxyribonuclease 7 small subunit (75 aa).

The protein belongs to the XseB family. As to quaternary structure, heterooligomer composed of large and small subunits.

The protein resides in the cytoplasm. It catalyses the reaction Exonucleolytic cleavage in either 5'- to 3'- or 3'- to 5'-direction to yield nucleoside 5'-phosphates.. Its function is as follows. Bidirectionally degrades single-stranded DNA into large acid-insoluble oligonucleotides, which are then degraded further into small acid-soluble oligonucleotides. The sequence is that of Exodeoxyribonuclease 7 small subunit from Listeria welshimeri serovar 6b (strain ATCC 35897 / DSM 20650 / CCUG 15529 / CIP 8149 / NCTC 11857 / SLCC 5334 / V8).